Consider the following 712-residue polypeptide: MSTQYDSDSSPAASNSGSADPALAELAQQWQSLADQVRHHREVYYYGNPEISDAEFDALLTRLQEFENSHPEAVTGPSPTTEVAPSPPESSPFRNVDHQEPMLSLDNVFDTEQLSSWLDRTPAKTYLTELKIDGASINLLYRNGVLELALTRGDGTTGEDITHNARTLSDIPARLQPSEDFPVPEIVEIRGEVFIRVEDFAKMNAQRQAEGQKMFANPRNAAAGAMRQKDPAETARRPLRLICHGIGAREGFTPASQHAAYEALAAWGLPVSPYTKQVHSAKEVLEQVAYWADHRHDADHEMDGLVIKVDDTESQQRLGTTSRAPRWAIAYKYPPEEARTRLHDIRLGIGRTGRATPYAVMEPKYVAGSTVTMATLHNPSEAHRKGVRLGDEIMIRKAGEVIPEVLGPVEDARNGAEREFLFSSLCPECGTPLAPARGDDADWRCPNTRYCPGQLHTRLTYIAGRGAFDIDALGEKAAYDLIHSGVLPDETGLFSLTEEDLRRTDAYTTKSGALNKQGETLLTTLAAAKEVDLWRVIVALSIRHVGPTAAKALANHYGSIPDVAAADVETMSTVDGVGPIIAESVRDWFAVSWHQEIVDAWAAAGVRMEQDVTEQPSADAAGSIQADLLAGLSIVVTGTLEDFDRSSAKEAIESRGGKATGSVSKKTDYLVAGAKAGSKLTKAEELGIPVLDEAGFHKLLSEGPGKGDAEED.

Low complexity predominate over residues 1 to 22 (MSTQYDSDSSPAASNSGSADPA). The tract at residues 1–23 (MSTQYDSDSSPAASNSGSADPAL) is disordered. Residue 53–57 (DAEFD) participates in NAD(+) binding. Residues 69–93 (SHPEAVTGPSPTTEVAPSPPESSPF) are disordered. NAD(+) is bound by residues 104 to 105 (SL) and Glu129. Residue Lys131 is the N6-AMP-lysine intermediate of the active site. Positions 152, 192, 308, and 332 each coordinate NAD(+). Zn(2+) is bound by residues Cys426, Cys429, Cys445, and Cys451. The region spanning 624-712 (IQADLLAGLS…GPGKGDAEED (89 aa)) is the BRCT domain.

This sequence belongs to the NAD-dependent DNA ligase family. LigA subfamily. It depends on Mg(2+) as a cofactor. Mn(2+) serves as cofactor.

It catalyses the reaction NAD(+) + (deoxyribonucleotide)n-3'-hydroxyl + 5'-phospho-(deoxyribonucleotide)m = (deoxyribonucleotide)n+m + AMP + beta-nicotinamide D-nucleotide.. In terms of biological role, DNA ligase that catalyzes the formation of phosphodiester linkages between 5'-phosphoryl and 3'-hydroxyl groups in double-stranded DNA using NAD as a coenzyme and as the energy source for the reaction. It is essential for DNA replication and repair of damaged DNA. In Corynebacterium urealyticum (strain ATCC 43042 / DSM 7109), this protein is DNA ligase.